The following is a 613-amino-acid chain: Ribosome-associated molecular chaperone SSB1 (613 aa).

Positions 1–391 (MAEGVFSGAI…ILTGSNLSDD (391 aa)) are nucleotide binding domain (NBD). Residues 16–18 (TTY), Lys-73, 205–207 (GGT), 271–278 (ERAKRTLS), and Gly-342 each bind ATP. The segment at 392 to 402 (TKDLLLLDVAP) is inter-domain linker. Positions 403–613 (LSLGVAMQGD…RVVTKAMATR (211 aa)) are substrate binding domain (SBD). Residues 516–612 (SEDIEKMVSQ…KRVVTKAMAT (97 aa)) are lid domain (SBDalpha). The Nuclear export signal motif lies at 574-582 (VEAALADAF).

This sequence belongs to the heat shock protein 70 family. Ssb-type Hsp70 subfamily. As to quaternary structure, binds to ribosomes. Binds close to the ribosomal tunnel exit via contacts with both ribosomal proteins and rRNA. Directly interacts with nascent polypeptides. This interaction is dependent on the ribosome-associated complex (RAC). Interacts with SSE1. Interacts with FES1.

The protein localises to the cytoplasm. The enzyme catalyses ATP + H2O = ADP + phosphate + H(+). Functionally, ribosome-bound, Hsp70-type chaperone that assists in the cotranslational folding of newly synthesized proteins in the cytosol. Stimulates folding by interacting with nascent chains, binding to short, largely hydrophobic sequences exposed by unfolded proteins, thereby stabilizing longer, more slowly translated, and aggregation-prone nascent polypeptides and domains that cannot fold stably until fully synthesized. The Hsp70-protein substrate interaction depends on ATP-binding and on allosteric regulation between the NBD and the SBD. The ATP-bound state is characterized by a fast exchange rate of substrate (low affinity state), while in the ADP-bound state exchange is much slower (high affinity state). During the Hsp70 cycle, the chaperone switches between the ATP-bound state (open conformation) and the ADP-bound state (closed conformation) by major conformational rearrangements involving mainly the lid domain. Ssb cooperates with a specific Hsp40/Hsp70 co-chaperone termed the ribosome-associated complex (RAC), which stimulates the ATPase activity of the ribosome-associated pool of Ssbs and switches it to the high affinity substrate binding state. Hsp110 chaperone SSE1 and FES1 act as nucleotide exchange factors that cause substrate release. This chain is Ribosome-associated molecular chaperone SSB1 (SSB1), found in Eremothecium gossypii (strain ATCC 10895 / CBS 109.51 / FGSC 9923 / NRRL Y-1056) (Yeast).